The chain runs to 215 residues: 3-isopropylmalate dehydratase small subunit (215 aa).

This sequence belongs to the LeuD family. LeuD type 1 subfamily. As to quaternary structure, heterodimer of LeuC and LeuD.

It carries out the reaction (2R,3S)-3-isopropylmalate = (2S)-2-isopropylmalate. Its pathway is amino-acid biosynthesis; L-leucine biosynthesis; L-leucine from 3-methyl-2-oxobutanoate: step 2/4. Catalyzes the isomerization between 2-isopropylmalate and 3-isopropylmalate, via the formation of 2-isopropylmaleate. In Cellvibrio japonicus (strain Ueda107) (Pseudomonas fluorescens subsp. cellulosa), this protein is 3-isopropylmalate dehydratase small subunit.